Reading from the N-terminus, the 336-residue chain is Malate dehydrogenase, cytoplasmic (336 aa).

NAD(+) contacts are provided by residues 11–17 (GAAGQIG) and Asp-42. The substrate site is built by Arg-92 and Arg-98. NAD(+) contacts are provided by residues Asn-105, Gln-112, and 129–131 (VGN). Substrate contacts are provided by Asn-131 and Arg-163. His-188 (proton acceptor) is an active-site residue.

It belongs to the LDH/MDH superfamily. MDH type 2 family. In terms of assembly, homodimer.

Its subcellular location is the cytoplasm. The enzyme catalyses (S)-malate + NAD(+) = oxaloacetate + NADH + H(+). In terms of biological role, catalyzes the reversible conversion of (S)-malate to oxaloacetate in the cytoplasm where oxaloacetate is used for gluconeogenesis. The sequence is that of Malate dehydrogenase, cytoplasmic from Caenorhabditis elegans.